Reading from the N-terminus, the 173-residue chain is Inner membrane protein YbcI (173 aa).

The Cytoplasmic portion of the chain corresponds to 1-12; the sequence is MPTVITHAAVPL. A helical membrane pass occupies residues 13-35; it reads CIGLGLGSKVIPPRLLFAGIILA. Topologically, residues 36–54 are periplasmic; the sequence is MLPDADVLSFKFGVAYGNV. A helical transmembrane segment spans residues 55 to 77; it reads FGHRGFTHSLVFAFVVPLLCVFI. The Cytoplasmic portion of the chain corresponds to 78 to 83; sequence GRRWFR. Residues 84 to 103 traverse the membrane as a helical segment; it reads AGLIRCWLFLTVSLLSHSLL. The Periplasmic portion of the chain corresponds to 104–147; it reads DSVTTGGKGVGWLWPWSDERFFAPWQVIKVAPFALSRYTTPYGH. The helical transmembrane segment at 148-170 threads the bilayer; it reads QVIISELMWVWLPGMLLMGMLWW. Residues 171–173 lie on the Cytoplasmic side of the membrane; the sequence is RRR.

The protein localises to the cell inner membrane. The chain is Inner membrane protein YbcI (ybcI) from Escherichia coli (strain K12).